The primary structure comprises 184 residues: NADH-quinone oxidoreductase subunit B (184 aa).

Cys37, Cys38, Cys103, and Cys132 together coordinate [4Fe-4S] cluster.

The protein belongs to the complex I 20 kDa subunit family. As to quaternary structure, NDH-1 is composed of 14 different subunits. Subunits NuoB, C, D, E, F, and G constitute the peripheral sector of the complex. Requires [4Fe-4S] cluster as cofactor.

The protein localises to the cell membrane. It catalyses the reaction a quinone + NADH + 5 H(+)(in) = a quinol + NAD(+) + 4 H(+)(out). In terms of biological role, NDH-1 shuttles electrons from NADH, via FMN and iron-sulfur (Fe-S) centers, to quinones in the respiratory chain. The immediate electron acceptor for the enzyme in this species is believed to be a menaquinone. Couples the redox reaction to proton translocation (for every two electrons transferred, four hydrogen ions are translocated across the cytoplasmic membrane), and thus conserves the redox energy in a proton gradient. The sequence is that of NADH-quinone oxidoreductase subunit B from Mycobacterium marinum (strain ATCC BAA-535 / M).